We begin with the raw amino-acid sequence, 358 residues long: C-X-C chemokine receptor type 4-A (358 aa).

An important for chemokine binding and signaling region spans residues 1–25 (MDGFSGGIDINIFDGNSTENGSGDF). At 1–44 (MDGFSGGIDINIFDGNSTENGSGDFEDFIEPCFMHENSDFNRIF) the chain is on the extracellular side. 2 N-linked (GlcNAc...) asparagine glycosylation sites follow: asparagine 16 and asparagine 20. 2 disulfide bridges follow: cysteine 32-cysteine 281 and cysteine 113-cysteine 190. A helical transmembrane segment spans residues 45-67 (LPTIYSFIFLLGIIGNGLVVVVM). The Cytoplasmic portion of the chain corresponds to 68 to 81 (GYQKKSRTMTDKYR). Residues 82–103 (LHLSVADLLFVFTLPFWSVDAA) traverse the membrane as a helical segment. A chemokine binding region spans residues 98–101 (WSVD). Residues 104 to 114 (IGWYFKEFLCK) lie on the Extracellular side of the membrane. Residues 115–134 (AVHVIYTVNLYSSVLILAFI) form a helical membrane-spanning segment. The interval 117 to 121 (HVIYT) is chemokine binding. Topologically, residues 135 to 158 (SLDRYLAIVHATNSQGSRKMLADK) are cytoplasmic. Residues 139 to 151 (YLAIVHATNSQGS) form an involved in dimerization; when bound to chemokine region. Residues 159–178 (VVYAGVWLPALLLTVPDLVF) form a helical membrane-spanning segment. The Extracellular segment spans residues 179–202 (ARVSDENGQFVCDRIYPIENRETW). The segment at 190–194 (CDRIY) is chemokine binding, important for signaling. The chain crosses the membrane as a helical span at residues 203–223 (TVGFRFLHITVGLILPGLIIL). The Cytoplasmic segment spans residues 224–248 (ICYCVIISKLSHSKGHQKRKALKTT). The helical transmembrane segment at 249–268 (VILILAFFACWLPYYVCLTT) threads the bilayer. At 269–289 (DTFMLLGLVKGDCIWENTLHM) the chain is on the extracellular side. Residues 290–309 (AISITEALAFFHCCLNPILY) form a helical membrane-spanning segment. Over 310–358 (AFLGAKFKTSAQNAFTSVSRGSSLKILSKKRAGLSSVSTESESSSFHSS) the chain is Cytoplasmic. The interval 338–358 (KKRAGLSSVSTESESSSFHSS) is disordered. The span at 344-358 (SSVSTESESSSFHSS) shows a compositional bias: low complexity.

This sequence belongs to the G-protein coupled receptor 1 family. As to quaternary structure, monomer. Can form dimers. Post-translationally, sulfation is required for efficient binding of cxcl12/sdf-1alpha and promotes its dimerization. In terms of processing, O- and N-glycosylated. As to expression, highly expressed in the embryonic nervous system including forebrain, hindbrain and sensory organs (including eye), and in neural crest cells. Also expressed in the dorsal lateral plate, the first site of definitive hematopoiesis in the embryo. Appears in migrating presumptive primordial germ cells (pPGCs) from stage 24. Expressed in the epidermis at stage 40. In the adult, highly expressed in the spleen with lower levels of expression in the liver and very low levels in kidney, heart, skin and brain.

It localises to the cell membrane. It is found in the cytoplasm. The protein resides in the nucleus. The protein localises to the early endosome. Its subcellular location is the late endosome. It localises to the lysosome. In terms of biological role, receptor for the C-X-C chemokine cxcl12/sdf-1. Transduces a signal by increasing the intracellular level of calcium ions. Signaling with cxcl12/sdf-1 mediates the directional movement of mesodermal cells during gastrulation. May play a role in the migration of embryonic presumptive primordial germ cells (pPGCs). May also be involved in regulating the migration of hematopoietic stem cells into the larval liver. This is C-X-C chemokine receptor type 4-A (cxcr4-a) from Xenopus laevis (African clawed frog).